A 197-amino-acid polypeptide reads, in one-letter code: Phosphoheptose isomerase (197 aa).

The SIS domain occupies 36–197 (MTASLMNNGK…IDCLLLGVEE (162 aa)). 51–53 (NGG) lines the substrate pocket. 2 residues coordinate Zn(2+): H60 and E64. Residues E64, 93–94 (ND), 119–121 (STS), S124, and Q174 contribute to the substrate site. The Zn(2+) site is built by Q174 and H182.

It belongs to the SIS family. GmhA subfamily. As to quaternary structure, homotetramer. Zn(2+) serves as cofactor.

It is found in the cytoplasm. The enzyme catalyses 2 D-sedoheptulose 7-phosphate = D-glycero-alpha-D-manno-heptose 7-phosphate + D-glycero-beta-D-manno-heptose 7-phosphate. The protein operates within carbohydrate biosynthesis; D-glycero-D-manno-heptose 7-phosphate biosynthesis; D-glycero-alpha-D-manno-heptose 7-phosphate and D-glycero-beta-D-manno-heptose 7-phosphate from sedoheptulose 7-phosphate: step 1/1. Functionally, catalyzes the isomerization of sedoheptulose 7-phosphate in D-glycero-D-manno-heptose 7-phosphate. The chain is Phosphoheptose isomerase from Azoarcus sp. (strain BH72).